Consider the following 1388-residue polypeptide: Endoribonuclease Dicer homolog 2 (1388 aa).

The region spanning 31–210 (ALEKAIKQNT…DSYWKKIHEL (180 aa)) is the Helicase ATP-binding domain. 44-51 (LETGSGKT) provides a ligand contact to ATP. The DECH box signature appears at 152–155 (DECH). The Helicase C-terminal domain occupies 380-544 (LGYSSLENIR…PLPDDSDEPL (165 aa)). Residues 559-645 (SVSLIYHYCS…VPDMVVAETV (87 aa)) form the Dicer dsRNA-binding fold domain. A PAZ domain is found at 805-935 (TSHEVLEKHE…LPPELCHVIL (131 aa)). 2 RNase III domains span residues 962-1113 (AYNL…SEGG) and 1149-1296 (VGYM…VDSG). Positions 1188, 1282, and 1285 each coordinate Mg(2+). In terms of domain architecture, DRBM spans 1315 to 1384 (TPETVKLHPV…YKEVLNLLKN (70 aa)).

The protein belongs to the helicase family. Dicer subfamily. Requires Mg(2+) as cofactor. Mn(2+) is required as a cofactor.

The protein resides in the nucleus. It localises to the cytoplasm. Ribonuclease (RNase) III involved in RNA-mediated post-transcriptional gene silencing (PTGS). Involved in the processing of natural small interfering RNAs (nat-siRNAs, derived from cis-natural antisense transcripts) by cleaving small dsRNAs into 24 nucleotide nat-siRNAs. Plays an essential role in transitive silencing of transgenes by processing secondary siRNAs. This pathway, which requires DCL4 and RDR6, amplifies silencing by using the target RNA as substrate to generate secondary siRNAs, providing an efficient mechanism for long-distance silencing. May participate with DCL3 in the production of 24 nucleotide repeat-associated siRNAs (ra-siRNAs) which derive from heterochromatin and DNA repeats such as transposons. Plays a role in antiviral RNA silencing. Involved in the production of viral siRNAs derived from the turnip crinkle virus (TCV) and tobacco rattle virus (TRV). Targeted by the viral silencing suppressor (VSR) protein 2b of the cucumber mosaic virus (CMV) that inactivates DCL2 function in RNA silencing. Does not seem to be involved in microRNAs (miRNAs) processing. The protein is Endoribonuclease Dicer homolog 2 of Arabidopsis thaliana (Mouse-ear cress).